Reading from the N-terminus, the 373-residue chain is Indole glucosinolate O-methyltransferase 2 (373 aa).

S-adenosyl-L-homocysteine-binding residues include Gly217, Asp240, Asp260, Met261, and Lys274. His278 acts as the Proton acceptor in catalysis.

Belongs to the class I-like SAM-binding methyltransferase superfamily. Cation-independent O-methyltransferase family.

It functions in the pathway secondary metabolite biosynthesis. In terms of biological role, involved in indole glucosinolate biosynthesis. Catalyzes methoxylation reactions of the glucosinolate indole ring. Converts the hydroxy intermediates 4-hydroxy-indol-3-yl-methylglucosinolate (4OH-I3M) and 1-hydroxy-indol-3-yl-methylglucosinolate (1OH-I3M) to 4-methoxy-indol-3-yl-methylglucosinolate (4MO-I3M) and 1-methoxy-indol-3-yl-methylglucosinolate (1MO-I3M), respectively. The polypeptide is Indole glucosinolate O-methyltransferase 2 (Arabidopsis thaliana (Mouse-ear cress)).